A 101-amino-acid chain; its full sequence is Putative defensin-like protein 86 (101 aa).

The N-terminal stretch at 1–27 (MAITKMSSLIILSLMMLTFIYIPMISG) is a signal peptide. 4 cysteine pairs are disulfide-bonded: Cys-35/Cys-71, Cys-39/Cys-59, Cys-45/Cys-69, and Cys-49/Cys-70.

Belongs to the DEFL family.

It localises to the secreted. This is Putative defensin-like protein 86 (LCR82) from Arabidopsis thaliana (Mouse-ear cress).